The chain runs to 333 residues: Acetoin:2,6-dichlorophenolindophenol oxidoreductase subunit alpha (333 aa).

Tetramer of 2 alpha and 2 beta subunits. Thiamine diphosphate is required as a cofactor.

Its pathway is ketone degradation; acetoin degradation. Catalyzes the 2,6-dichlorophenolindophenol-dependent cleavage of acetoin into acetate and acetaldehyde, in vitro. The alpha subunit is probably the catalytic subunit of the enzyme. The chain is Acetoin:2,6-dichlorophenolindophenol oxidoreductase subunit alpha (acoA) from Cupriavidus necator (strain ATCC 17699 / DSM 428 / KCTC 22496 / NCIMB 10442 / H16 / Stanier 337) (Ralstonia eutropha).